A 165-amino-acid polypeptide reads, in one-letter code: Phosphopantetheine adenylyltransferase (165 aa).

A substrate-binding site is contributed by serine 10. ATP contacts are provided by residues 10 to 11 and histidine 18; that span reads SF. Lysine 42, threonine 79, and arginine 93 together coordinate substrate. ATP is bound by residues 94-96, glutamate 104, and 129-135; these read GLR and VRPITAT.

Belongs to the bacterial CoaD family. As to quaternary structure, homohexamer. Mg(2+) is required as a cofactor.

The protein localises to the cytoplasm. It carries out the reaction (R)-4'-phosphopantetheine + ATP + H(+) = 3'-dephospho-CoA + diphosphate. It functions in the pathway cofactor biosynthesis; coenzyme A biosynthesis; CoA from (R)-pantothenate: step 4/5. In terms of biological role, reversibly transfers an adenylyl group from ATP to 4'-phosphopantetheine, yielding dephospho-CoA (dPCoA) and pyrophosphate. This is Phosphopantetheine adenylyltransferase from Rhodopseudomonas palustris (strain HaA2).